The chain runs to 512 residues: NAD(P)H-quinone oxidoreductase subunit 2 B, chloroplastic (512 aa).

A run of 14 helical transmembrane segments spans residues 31–51, 57–77, 99–119, 124–144, 149–169, 183–203, 229–249, 261–281, 295–315, 323–343, 354–374, 395–415, 418–438, and 484–504; these read FIFP…IDLT, IPWL…ALLF, IFQF…VEYI, MAIT…MFLC, LITI…LSGY, YLLM…WLYG, ISIA…LAPF, PTPV…ALAT, WHLL…LIAI, MLAY…IVGD, YMLF…LFGL, ALSL…AGFF, LYLF…IGLL, and MIVC…IIAI.

Belongs to the complex I subunit 2 family. In terms of assembly, NDH is composed of at least 16 different subunits, 5 of which are encoded in the nucleus.

It localises to the plastid. The protein resides in the chloroplast thylakoid membrane. The catalysed reaction is a plastoquinone + NADH + (n+1) H(+)(in) = a plastoquinol + NAD(+) + n H(+)(out). The enzyme catalyses a plastoquinone + NADPH + (n+1) H(+)(in) = a plastoquinol + NADP(+) + n H(+)(out). Functionally, NDH shuttles electrons from NAD(P)H:plastoquinone, via FMN and iron-sulfur (Fe-S) centers, to quinones in the photosynthetic chain and possibly in a chloroplast respiratory chain. The immediate electron acceptor for the enzyme in this species is believed to be plastoquinone. Couples the redox reaction to proton translocation, and thus conserves the redox energy in a proton gradient. In Arabidopsis thaliana (Mouse-ear cress), this protein is NAD(P)H-quinone oxidoreductase subunit 2 B, chloroplastic.